The sequence spans 154 residues: Secreted RxLR effector protein PITG_21681 (154 aa).

The first 20 residues, 1–20, serve as a signal peptide directing secretion; the sequence is MRRYAALMVIDAVLLSTSQA. Residues 42-70 are disordered; that stretch reads SAERDGGIPNKRSLRRISVTESNDGERDE. The short motif at 53-72 is the RxLR-dEER element; that stretch reads RSLRRISVTESNDGERDEER.

The protein belongs to the RxLR effector family.

It is found in the secreted. It localises to the host cell. Its function is as follows. Secreted effector that is involved in host plant infection. Increases the susceptibility to P.infestans and reduces the plant growth. Affects the expression of host genes. In Phytophthora infestans (strain T30-4) (Potato late blight agent), this protein is Secreted RxLR effector protein PITG_21681.